Consider the following 213-residue polypeptide: Protein FAM156A/FAM156B (213 aa).

M1 is modified (N-acetylmethionine). The segment at 1–62 (MDPLQKRNPA…SQAVPLPEGL (62 aa)) is disordered. A compositionally biased stretch (polar residues) spans 8 to 37 (NPASPSKSSPMTAAETSQEGPAPSQPSYSE). Position 114 is a phosphoserine (S114). The chain crosses the membrane as a helical span at residues 154-170 (WETLVQGLSGLTLSLGT). Residues 165-198 (TLSLGTNQPGPLPEAALQPQETEEKRQRERQQES) are disordered. Over residues 186-197 (TEEKRQRERQQE) the composition is skewed to basic and acidic residues.

The protein resides in the membrane. This Homo sapiens (Human) protein is Protein FAM156A/FAM156B (FAM156A).